Consider the following 317-residue polypeptide: Serpentine receptor class delta-47 (317 aa).

The next 7 membrane-spanning stretches (helical) occupy residues 8–28 (IFYP…FVVV), 42–62 (VLFC…LLQL), 89–109 (CLYF…LLTI), 128–148 (IVII…IYSV), 185–205 (YLII…GLYT), 239–259 (ACLP…VIGT), and 270–290 (ISVL…YSVA).

This sequence belongs to the nematode receptor-like protein srd family.

It is found in the membrane. The protein is Serpentine receptor class delta-47 (srd-47) of Caenorhabditis elegans.